Consider the following 154-residue polypeptide: uncharacterized protein (154 aa).

This is an uncharacterized protein from Bacillus subtilis (strain 168).